Consider the following 573-residue polypeptide: 2-succinyl-5-enolpyruvyl-6-hydroxy-3-cyclohexene-1-carboxylate synthase (573 aa).

Belongs to the TPP enzyme family. MenD subfamily. In terms of assembly, homodimer. It depends on Mg(2+) as a cofactor. Mn(2+) is required as a cofactor. Thiamine diphosphate serves as cofactor.

It carries out the reaction isochorismate + 2-oxoglutarate + H(+) = 5-enolpyruvoyl-6-hydroxy-2-succinyl-cyclohex-3-ene-1-carboxylate + CO2. It participates in quinol/quinone metabolism; 1,4-dihydroxy-2-naphthoate biosynthesis; 1,4-dihydroxy-2-naphthoate from chorismate: step 2/7. It functions in the pathway quinol/quinone metabolism; menaquinone biosynthesis. In terms of biological role, catalyzes the thiamine diphosphate-dependent decarboxylation of 2-oxoglutarate and the subsequent addition of the resulting succinic semialdehyde-thiamine pyrophosphate anion to isochorismate to yield 2-succinyl-5-enolpyruvyl-6-hydroxy-3-cyclohexene-1-carboxylate (SEPHCHC). The polypeptide is 2-succinyl-5-enolpyruvyl-6-hydroxy-3-cyclohexene-1-carboxylate synthase (Shewanella sp. (strain MR-4)).